The following is a 129-amino-acid chain: Large ribosomal subunit protein eL31 (129 aa).

Positions 1-46 (MSQETTATKQEEQKTSELQQQKKEEQKPQQATTTTKEEKKTKPEKE) are disordered. Composition is skewed to basic and acidic residues over residues 9 to 27 (KQEE…EEQK) and 35 to 46 (TKEEKKTKPEKE).

It belongs to the eukaryotic ribosomal protein eL31 family.

This Sulfolobus acidocaldarius (strain ATCC 33909 / DSM 639 / JCM 8929 / NBRC 15157 / NCIMB 11770) protein is Large ribosomal subunit protein eL31 (rpl31e).